Reading from the N-terminus, the 281-residue chain is Diaminopimelate epimerase (281 aa).

The substrate site is built by Asn-13 and Asn-66. The active-site Proton donor is Cys-75. Substrate contacts are provided by residues 76–77 (GN), Asn-164, Asn-197, and 215–216 (ER). Residue Cys-224 is the Proton acceptor of the active site. 225–226 (GT) provides a ligand contact to substrate.

It belongs to the diaminopimelate epimerase family. As to quaternary structure, homodimer.

It is found in the cytoplasm. The catalysed reaction is (2S,6S)-2,6-diaminopimelate = meso-2,6-diaminopimelate. The protein operates within amino-acid biosynthesis; L-lysine biosynthesis via DAP pathway; DL-2,6-diaminopimelate from LL-2,6-diaminopimelate: step 1/1. Catalyzes the stereoinversion of LL-2,6-diaminopimelate (L,L-DAP) to meso-diaminopimelate (meso-DAP), a precursor of L-lysine and an essential component of the bacterial peptidoglycan. The polypeptide is Diaminopimelate epimerase (Picosynechococcus sp. (strain ATCC 27264 / PCC 7002 / PR-6) (Agmenellum quadruplicatum)).